The primary structure comprises 758 residues: Putative transcriptional regulatory protein YJL206C (758 aa).

The zn(2)-C6 fungal-type DNA-binding region spans 47 to 73 (CIACRKRKVRCSGNIPCRLCQTNSYEC).

It belongs to the ASG1 family.

The protein resides in the nucleus. The polypeptide is Putative transcriptional regulatory protein YJL206C (Saccharomyces cerevisiae (strain ATCC 204508 / S288c) (Baker's yeast)).